Consider the following 805-residue polypeptide: Pentatricopeptide repeat-containing protein At4g01570 (805 aa).

16 PPR repeats span residues 91–125 (SATA…GVNL), 126–160 (DQTM…GDCL), 161–196 (NPSV…DNHS), 211–241 (GTVA…LKGM), 247–277 (DTWS…MKER), 288–322 (DICT…GHEP), 323–357 (DNST…GFVP), 358–392 (DTIV…GVRA), 393–427 (SCWT…GQFV), 428–462 (DAIT…GFSV), 463–497 (DLVT…NLVP), 593–627 (DVDM…GVTD), 629–663 (TSYT…FCAA), 664–698 (DIAT…GGYL), 699–733 (DIVM…GINP), and 734–768 (DVVS…GCLP).

This sequence belongs to the PPR family. P subfamily.

The polypeptide is Pentatricopeptide repeat-containing protein At4g01570 (Arabidopsis thaliana (Mouse-ear cress)).